The sequence spans 205 residues: MKKELIYKALKLRDMGFPSGDIAEELNISVKTALYLTLNGEDLLKSTESPKEDSEKADIFLEWDSVRASSKRLKHIAKIMCDILGQVEFDGIVGISSGGVPLATLISDEMDKNFSIFVPKKHIHTEKEKTTGFIGQNFSSIVGKDVIIVDDVMTSGNAVKEAIKYLKSISNPKMVVVVMDKSGIDEIDGVPVHHLFRTGIVDIKK.

Belongs to the purine/pyrimidine phosphoribosyltransferase family. GfcR subfamily.

The chain is Transcriptional regulator GfcR from Methanococcus vannielii (strain ATCC 35089 / DSM 1224 / JCM 13029 / OCM 148 / SB).